Here is a 346-residue protein sequence, read N- to C-terminus: Carbamoyl phosphate synthase small chain (346 aa).

Residues 1 to 160 (MEDGSVFAGR…SVKEPVLLGE (160 aa)) are CPSase. L-glutamine is bound by residues S39, G209, and G211. Positions 164–346 (CIGVVDCGVK…FLKLVERHGH (183 aa)) constitute a Glutamine amidotransferase type-1 domain. Residue C237 is the Nucleophile of the active site. L-glutamine contacts are provided by L238, Q241, N280, G282, and Y283. Active-site residues include H320 and E322.

The protein belongs to the CarA family. Composed of two chains; the small (or glutamine) chain promotes the hydrolysis of glutamine to ammonia, which is used by the large (or ammonia) chain to synthesize carbamoyl phosphate. Tetramer of heterodimers (alpha,beta)4.

It catalyses the reaction hydrogencarbonate + L-glutamine + 2 ATP + H2O = carbamoyl phosphate + L-glutamate + 2 ADP + phosphate + 2 H(+). The catalysed reaction is L-glutamine + H2O = L-glutamate + NH4(+). It participates in amino-acid biosynthesis; L-arginine biosynthesis; carbamoyl phosphate from bicarbonate: step 1/1. Its pathway is pyrimidine metabolism; UMP biosynthesis via de novo pathway; (S)-dihydroorotate from bicarbonate: step 1/3. In terms of biological role, small subunit of the glutamine-dependent carbamoyl phosphate synthetase (CPSase). CPSase catalyzes the formation of carbamoyl phosphate from the ammonia moiety of glutamine, carbonate, and phosphate donated by ATP, constituting the first step of 2 biosynthetic pathways, one leading to arginine and/or urea and the other to pyrimidine nucleotides. The small subunit (glutamine amidotransferase) binds and cleaves glutamine to supply the large subunit with the substrate ammonia. This chain is Carbamoyl phosphate synthase small chain, found in Pyrobaculum aerophilum (strain ATCC 51768 / DSM 7523 / JCM 9630 / CIP 104966 / NBRC 100827 / IM2).